We begin with the raw amino-acid sequence, 241 residues long: MISVRRGFSQLWYWGKRGVIGIIALWMAGILIFAFLPVPFSMVMIERQLGAWLTGDFAYVAHSDWVPMDEISPYMALAVMAAEDQKFPDHWGFDVGAIESALSHNQRNQKRIRGASTLSQQTAKNVFLWDGRSWVRKGLEVGLTAGIELIWTKRRILTVYLNIAEFGNGIFGVEAAARHFFNKPASKLSASEAALLAAVLPNPLRFKVNAPSGYVISRQQWILRQMHQLGGKTFLQENTLD.

A helical membrane pass occupies residues 18–38; that stretch reads GVIGIIALWMAGILIFAFLPV.

This sequence belongs to the glycosyltransferase 51 family.

Its subcellular location is the cell inner membrane. It catalyses the reaction [GlcNAc-(1-&gt;4)-Mur2Ac(oyl-L-Ala-gamma-D-Glu-L-Lys-D-Ala-D-Ala)](n)-di-trans,octa-cis-undecaprenyl diphosphate + beta-D-GlcNAc-(1-&gt;4)-Mur2Ac(oyl-L-Ala-gamma-D-Glu-L-Lys-D-Ala-D-Ala)-di-trans,octa-cis-undecaprenyl diphosphate = [GlcNAc-(1-&gt;4)-Mur2Ac(oyl-L-Ala-gamma-D-Glu-L-Lys-D-Ala-D-Ala)](n+1)-di-trans,octa-cis-undecaprenyl diphosphate + di-trans,octa-cis-undecaprenyl diphosphate + H(+). The protein operates within cell wall biogenesis; peptidoglycan biosynthesis. Peptidoglycan polymerase that catalyzes glycan chain elongation from lipid-linked precursors. The sequence is that of Biosynthetic peptidoglycan transglycosylase from Yersinia pestis bv. Antiqua (strain Antiqua).